The following is a 255-amino-acid chain: Coenzyme F420:L-glutamate ligase (255 aa).

GTP is bound by residues 11–14 (IPLI), 40–41 (ST), and Lys-45. Position 109 (Asp-109) interacts with a divalent metal cation. Asn-112 lines the GTP pocket. A divalent metal cation is bound by residues Asp-150, Thr-151, and Glu-208. 206–213 (MGEGAGGT) contributes to the GTP binding site.

The protein belongs to the CofE family. In terms of assembly, homodimer. Mg(2+) serves as cofactor. It depends on Mn(2+) as a cofactor. The cofactor is K(+).

The enzyme catalyses oxidized coenzyme F420-0 + GTP + L-glutamate = oxidized coenzyme F420-1 + GDP + phosphate + H(+). It catalyses the reaction oxidized coenzyme F420-1 + GTP + L-glutamate = oxidized coenzyme F420-2 + GDP + phosphate + H(+). It participates in cofactor biosynthesis; coenzyme F420 biosynthesis. In terms of biological role, catalyzes the GTP-dependent successive addition of two or more gamma-linked L-glutamates to the L-lactyl phosphodiester of 7,8-didemethyl-8-hydroxy-5-deazariboflavin (F420-0) to form coenzyme F420-0-glutamyl-glutamate (F420-2) or polyglutamated F420 derivatives. The chain is Coenzyme F420:L-glutamate ligase from Methanosarcina barkeri (strain Fusaro / DSM 804).